The primary structure comprises 550 residues: Coiled-coil domain-containing protein 60 (550 aa).

The tract at residues 1–21 (MTKVPATKKLQSSPNSGAVRP) is disordered. Positions 71 to 98 (AILREETAKKKKQQQLQKLKEEERNKFQ) form a coiled coil. Disordered regions lie at residues 219-293 (KFKI…EPLY) and 336-367 (AYKE…KKSK). Over residues 235 to 256 (RGSTLSLSRASGGSSPQSSMIS) the composition is skewed to low complexity. The span at 336 to 345 (AYKEMQTTLK) shows a compositional bias: polar residues.

In Homo sapiens (Human), this protein is Coiled-coil domain-containing protein 60 (CCDC60).